Consider the following 324-residue polypeptide: MKPLSRRQEQVLQATVHHYVDTMEPVGSRTLVQRFSMPASSATIRSAMGALEQRGLLTQPHTSSGRIPSALGYRHYVDCLLPEPAATVLHLERELTGLSLGWAALDDLLLQLARRLTDFTGLMSLITRPTRTQPQLAAIRLVQSGERLLVMLVENSGHASHLNLRLPHATSDELDAIERWAEQQLRGGALNWEKLPTQLQRSGDVLRHALEHPSISAEPTTLVHGLSRLVAEPEFQSAQDLGPLLQLIDDEPMALISPGAEARVLIGQEHPQSALEACSVVQAPYRCGQEGTGHIALIGPMRMAYATACSAVERVARHLELLLS.

The protein belongs to the HrcA family.

Functionally, negative regulator of class I heat shock genes (grpE-dnaK-dnaJ and groELS operons). Prevents heat-shock induction of these operons. This is Heat-inducible transcription repressor HrcA from Synechococcus sp. (strain CC9902).